Reading from the N-terminus, the 361-residue chain is Phospho-N-acetylmuramoyl-pentapeptide-transferase (361 aa).

10 consecutive transmembrane segments (helical) span residues 28–48, 74–94, 99–119, 133–153, 168–188, 203–223, 236–256, 263–283, 288–308, and 338–358; these read LAII…IKFL, TMGG…LADL, IWIT…DDYA, SKLL…EYTD, LSLD…VGSS, VPIA…GNLI, TGEL…FLWF, VFMG…ISVI, VVLS…ILQV, and KVVI…LSSL.

Belongs to the glycosyltransferase 4 family. MraY subfamily. Mg(2+) is required as a cofactor.

It is found in the cell inner membrane. It carries out the reaction UDP-N-acetyl-alpha-D-muramoyl-L-alanyl-gamma-D-glutamyl-meso-2,6-diaminopimeloyl-D-alanyl-D-alanine + di-trans,octa-cis-undecaprenyl phosphate = di-trans,octa-cis-undecaprenyl diphospho-N-acetyl-alpha-D-muramoyl-L-alanyl-D-glutamyl-meso-2,6-diaminopimeloyl-D-alanyl-D-alanine + UMP. It participates in cell wall biogenesis; peptidoglycan biosynthesis. Its function is as follows. Catalyzes the initial step of the lipid cycle reactions in the biosynthesis of the cell wall peptidoglycan: transfers peptidoglycan precursor phospho-MurNAc-pentapeptide from UDP-MurNAc-pentapeptide onto the lipid carrier undecaprenyl phosphate, yielding undecaprenyl-pyrophosphoryl-MurNAc-pentapeptide, known as lipid I. The chain is Phospho-N-acetylmuramoyl-pentapeptide-transferase from Rickettsia canadensis (strain McKiel).